The sequence spans 496 residues: Probable cytosol aminopeptidase (496 aa).

Mn(2+)-binding residues include Lys-251 and Asp-256. The active site involves Lys-263. Positions 274, 333, and 335 each coordinate Mn(2+). Residue Arg-337 is part of the active site.

The protein belongs to the peptidase M17 family. Mn(2+) is required as a cofactor.

Its subcellular location is the cytoplasm. The enzyme catalyses Release of an N-terminal amino acid, Xaa-|-Yaa-, in which Xaa is preferably Leu, but may be other amino acids including Pro although not Arg or Lys, and Yaa may be Pro. Amino acid amides and methyl esters are also readily hydrolyzed, but rates on arylamides are exceedingly low.. The catalysed reaction is Release of an N-terminal amino acid, preferentially leucine, but not glutamic or aspartic acids.. Presumably involved in the processing and regular turnover of intracellular proteins. Catalyzes the removal of unsubstituted N-terminal amino acids from various peptides. The chain is Probable cytosol aminopeptidase from Acidovorax ebreus (strain TPSY) (Diaphorobacter sp. (strain TPSY)).